The following is a 368-amino-acid chain: MCETARTLPPDIVPITVEEARTLIRHTGGPALDALLDRADAVRRAVHGDEVALCGITNAKSGRCPENCGFCSQSAHFPGADAPVYPLVPAEEMVAQAKVAERAGAREFSIVTSGTRVAKESELATIEEAVRKLRAETAVEPCASLGLVREPELVRLKAAGLMHYHHNLETARSFFENVCTTHTYDEQLETIRAAKRQGLKLCSGGILGMGETPEQRVELAATIRELGIDCVPMNFLNPRPGTPMEHVQAITAEECLAAVAVFRLMMPAAHIFVMGGREVNLGGRQHLIFRAGANGTMVGNYLTSAGRGPGETVRMVEEQGLRLRAPDTGREWAFDGSAPAEAEWNRRAAEPGGKRGLPVVGPPRGGCA.

The 232-residue stretch at 46 to 277 (VHGDEVALCG…AAHIFVMGGR (232 aa)) folds into the Radical SAM core domain. C64, C68, and C71 together coordinate [4Fe-4S] cluster. [2Fe-2S] cluster-binding residues include S109, C142, and C202. Residues 347 to 368 (RAAEPGGKRGLPVVGPPRGGCA) are disordered.

This sequence belongs to the radical SAM superfamily. Biotin synthase family. As to quaternary structure, homodimer. Requires [4Fe-4S] cluster as cofactor. [2Fe-2S] cluster is required as a cofactor.

It catalyses the reaction (4R,5S)-dethiobiotin + (sulfur carrier)-SH + 2 reduced [2Fe-2S]-[ferredoxin] + 2 S-adenosyl-L-methionine = (sulfur carrier)-H + biotin + 2 5'-deoxyadenosine + 2 L-methionine + 2 oxidized [2Fe-2S]-[ferredoxin]. It participates in cofactor biosynthesis; biotin biosynthesis; biotin from 7,8-diaminononanoate: step 2/2. Catalyzes the conversion of dethiobiotin (DTB) to biotin by the insertion of a sulfur atom into dethiobiotin via a radical-based mechanism. This chain is Biotin synthase, found in Anaeromyxobacter sp. (strain Fw109-5).